A 320-amino-acid chain; its full sequence is o-succinylbenzoate synthase (320 aa).

Lys-133 (proton donor) is an active-site residue. 3 residues coordinate Mg(2+): Asp-161, Glu-190, and Asp-213. Lys-235 acts as the Proton acceptor in catalysis.

This sequence belongs to the mandelate racemase/muconate lactonizing enzyme family. MenC type 1 subfamily. Requires a divalent metal cation as cofactor.

It carries out the reaction (1R,6R)-6-hydroxy-2-succinyl-cyclohexa-2,4-diene-1-carboxylate = 2-succinylbenzoate + H2O. Its pathway is quinol/quinone metabolism; 1,4-dihydroxy-2-naphthoate biosynthesis; 1,4-dihydroxy-2-naphthoate from chorismate: step 4/7. It participates in quinol/quinone metabolism; menaquinone biosynthesis. Converts 2-succinyl-6-hydroxy-2,4-cyclohexadiene-1-carboxylate (SHCHC) to 2-succinylbenzoate (OSB). The chain is o-succinylbenzoate synthase from Escherichia coli O139:H28 (strain E24377A / ETEC).